The following is a 519-amino-acid chain: MQPIQRALISVSDKTGLLDFARVLAARGVEILSTGGTARLLADNGLTVVEVSDHTGFPEMMDGRVKTLHPRIHGGILGRRGLDDAVMTEHGIPPIDLVVVNLYPFEQTVANPDCDLETAIENIDIGGPTLLRAAAKNHASVTVVVDAADYERVAEEIQSSGGVSEATRFDLAAKVFEHTARYDGAIANYLSARAESEAGASFPRTLTLQFKRRQSMRYGENPHQNAAFYVEHQVAEAGISTATQIQGKELSYNNIADTDAALECVKQFDEAPACVIVKHANPCGVAFGATLLEAYDRAYQTDPESAFGGIIAFNRELDAETAHAIVERQFVEVIIAPRVSDAARAAVASKPNVRLLECGDWSREPGDRLDFKRVNGGLLVQDADLRLTDQIRTVTERTPTEAELADLLFTWRVAKFVKSNAIVYGRERMTIGVGAGQMSRVNSARIAAIKAEHAGLTVAGSVMASDAFFPFRDGIDQAAAAGIKAVIQPGGSMRDAEVIAAANEHGMAMVFTGMRHFRH.

Residues Met1–Val145 form the MGS-like domain.

Belongs to the PurH family.

It catalyses the reaction (6R)-10-formyltetrahydrofolate + 5-amino-1-(5-phospho-beta-D-ribosyl)imidazole-4-carboxamide = 5-formamido-1-(5-phospho-D-ribosyl)imidazole-4-carboxamide + (6S)-5,6,7,8-tetrahydrofolate. It carries out the reaction IMP + H2O = 5-formamido-1-(5-phospho-D-ribosyl)imidazole-4-carboxamide. It functions in the pathway purine metabolism; IMP biosynthesis via de novo pathway; 5-formamido-1-(5-phospho-D-ribosyl)imidazole-4-carboxamide from 5-amino-1-(5-phospho-D-ribosyl)imidazole-4-carboxamide (10-formyl THF route): step 1/1. The protein operates within purine metabolism; IMP biosynthesis via de novo pathway; IMP from 5-formamido-1-(5-phospho-D-ribosyl)imidazole-4-carboxamide: step 1/1. This is Bifunctional purine biosynthesis protein PurH from Allochromatium vinosum (strain ATCC 17899 / DSM 180 / NBRC 103801 / NCIMB 10441 / D) (Chromatium vinosum).